Here is a 219-residue protein sequence, read N- to C-terminus: Chloramphenicol acetyltransferase (219 aa).

The active-site Proton acceptor is histidine 190.

This sequence belongs to the chloramphenicol acetyltransferase family. In terms of assembly, homotrimer.

The enzyme catalyses chloramphenicol + acetyl-CoA = chloramphenicol 3-acetate + CoA. This enzyme is an effector of chloramphenicol resistance in bacteria. This is Chloramphenicol acetyltransferase (catQ) from Clostridium perfringens.